We begin with the raw amino-acid sequence, 30 residues long: Kalata-B5 (30 aa).

The segment at residues 1 to 30 is a cross-link (cyclopeptide (Gly-Asn)); it reads GTPCGESCVYIPCISGVIGCSCTDKVCYLN. 3 disulfide bridges follow: Cys4-Cys20, Cys8-Cys22, and Cys13-Cys27.

This is a cyclic peptide.

Its function is as follows. Probably participates in a plant defense mechanism. The chain is Kalata-B5 from Oldenlandia affinis.